A 456-amino-acid chain; its full sequence is UDP-glycosyltransferase 84B1 (456 aa).

UDP-alpha-D-glucose contacts are provided by residues Ser278, 332-334 (SPQ), 349-357 (HCGWNSTME), and 371-374 (WTDQ).

It belongs to the UDP-glycosyltransferase family.

In terms of biological role, possesses low quercetin 7-O-glucosyltransferase activity in vitro. The sequence is that of UDP-glycosyltransferase 84B1 (UGT84B1) from Arabidopsis thaliana (Mouse-ear cress).